Consider the following 406-residue polypeptide: Succinylornithine transaminase (406 aa).

N6-(pyridoxal phosphate)lysine is present on lysine 252.

This sequence belongs to the class-III pyridoxal-phosphate-dependent aminotransferase family. AstC subfamily. Pyridoxal 5'-phosphate is required as a cofactor.

It carries out the reaction N(2)-succinyl-L-ornithine + 2-oxoglutarate = N-succinyl-L-glutamate 5-semialdehyde + L-glutamate. Its pathway is amino-acid degradation; L-arginine degradation via AST pathway; L-glutamate and succinate from L-arginine: step 3/5. In terms of biological role, catalyzes the transamination of N(2)-succinylornithine and alpha-ketoglutarate into N(2)-succinylglutamate semialdehyde and glutamate. Can also act as an acetylornithine aminotransferase. The polypeptide is Succinylornithine transaminase (Escherichia coli (strain 55989 / EAEC)).